A 124-amino-acid polypeptide reads, in one-letter code: Glycine cleavage system H protein (124 aa).

The region spanning 24–106 (TYTMGITDHA…YDDGWLVKFK (83 aa)) is the Lipoyl-binding domain. Lys65 carries the N6-lipoyllysine modification.

The protein belongs to the GcvH family. The glycine cleavage system is composed of four proteins: P, T, L and H. (R)-lipoate is required as a cofactor.

The glycine cleavage system catalyzes the degradation of glycine. The H protein shuttles the methylamine group of glycine from the P protein to the T protein. In Ruthia magnifica subsp. Calyptogena magnifica, this protein is Glycine cleavage system H protein.